A 69-amino-acid polypeptide reads, in one-letter code: Small ribosomal subunit protein uS14 (69 aa).

Positions 33, 36, 51, and 54 each coordinate Zn(2+).

The protein belongs to the universal ribosomal protein uS14 family. Zinc-binding uS14 subfamily. As to quaternary structure, part of the 30S ribosomal subunit. Zn(2+) is required as a cofactor.

Its function is as follows. Binds 16S rRNA, required for the assembly of 30S particles. This chain is Small ribosomal subunit protein uS14, found in Nanoarchaeum equitans (strain Kin4-M).